Here is a 324-residue protein sequence, read N- to C-terminus: Aprataxin (324 aa).

The region spanning 23–72 is the FHA-like domain; that stretch reads SVTLGRGPDTKIKDKKCSREQVELRADCNRGFVTVKQLGVNPTLVDDVVV. Positions 100 to 160 are disordered; that stretch reads TEDTSRSKPS…QGLKASMQDP (61 aa). Over residues 111–125 the composition is skewed to polar residues; the sequence is RAQQIQSPTKTTADV. Residues 150–255 form the HIT domain; it reads SQGLKASMQD…ISQDFDSPCL (106 aa). 2 interaction with DNA substrate regions span residues 175-179 and 237-238; these read DKYPK and SM. A Histidine triad motif motif is present at residues 240-244; the sequence is HVHLH. Histidine 242 serves as the catalytic Tele-AMP-histidine intermediate. The C2H2-type zinc-finger motif lies at 299-321; sequence LRCHVCGKEQTTIPKLKDHLKTH.

It localises to the nucleus. The protein resides in the nucleoplasm. It is found in the nucleolus. It catalyses the reaction a 5'-end adenosine-5'-diphospho-5'-2'-deoxyribonucleoside-DNA + H2O = a 5'-end 5'-phospho-2'-deoxyribonucleoside-DNA + AMP + 2 H(+). It carries out the reaction a 5'-end adenosine-5'-diphospho-5'-ribonucleoside-2'-deoxyribonucleotide-DNA + H2O = a 5'-end 5'-phospho-ribonucleoside-2'-deoxyribonucleotide-DNA + AMP + 2 H(+). The catalysed reaction is a 3'-end 2'-deoxyribonucleotide-3'-diphospho-5'-guanosine-DNA + H2O = a 3'-end 2'-deoxyribonucleotide 3'-phosphate-DNA + GMP + 2 H(+). In terms of biological role, DNA-binding protein involved in single-strand DNA break repair, double-strand DNA break repair and base excision repair. Resolves abortive DNA ligation intermediates formed either at base excision sites, or when DNA ligases attempt to repair non-ligatable breaks induced by reactive oxygen species. Catalyzes the release of adenylate groups covalently linked to 5'-phosphate termini, resulting in the production of 5'-phosphate termini that can be efficiently rejoined. Also able to hydrolyze adenosine 5'-monophosphoramidate (AMP-NH(2)) and diadenosine tetraphosphate (AppppA), but with lower catalytic activity. Likewise, catalyzes the release of 3'-linked guanosine (DNAppG) and inosine (DNAppI) from DNA, but has higher specific activity with 5'-linked adenosine (AppDNA). The sequence is that of Aprataxin (aptx) from Danio rerio (Zebrafish).